The following is a 362-amino-acid chain: MPQNVVLPGPAPWGFRLSGGIDFNQPLVITRITPGSKAEAANLCPGDVILAIDGFGTESMTHADAQDRIKAASYQLCLKIDRAETRLCPAVSEDGKAHPFKINLEAEPQDVNYFEHKHNIRPKPFIIPGRTSGCSTPSGIDCGSGRSTPSSVSTVSTICPGDLKVAAKMAPNIPLEMELPGVKIVHAQFNTPMQLYSDDNIMETLQGQVSTALGETPSMSEPTASVPPQSDVYRMLHDNRDEPAAPRQSGSFRVLQELVNDGSDDRPAGTRSVRPVTKVHGGAGGAQRMPLCDKCGSGIVGAVVKARDKYRHPECFVCADCNLNLKQKGYFFVEGELYCEMHARARTRPPEGYDTVTLYPKA.

Residues 1–84 (MPQNVVLPGP…QLCLKIDRAE (84 aa)) enclose the PDZ domain. Phosphoserine occurs at positions 18, 92, and 263. Residues 261–282 (DGSDDRPAGTRSVRPVTKVHGG) are disordered. Residues 290-349 (PLCDKCGSGIVGAVVKARDKYRHPECFVCADCNLNLKQKGYFFVEGELYCEMHARARTRP) enclose the LIM zinc-binding domain.

Interacts with ACTN2. Forms a heterodimer with PDLIM4 (via LIM domain). As to expression, highly expressed in skeletal muscle and at low levels in the heart.

It is found in the cytoplasm. Its subcellular location is the myofibril. The protein localises to the sarcomere. It localises to the z line. May play a role in the organization of actin filament arrays within muscle cells. This chain is PDZ and LIM domain protein 3 (Pdlim3), found in Rattus norvegicus (Rat).